A 62-amino-acid polypeptide reads, in one-letter code: Large ribosomal subunit protein uL29 (62 aa).

It belongs to the universal ribosomal protein uL29 family.

The protein is Large ribosomal subunit protein uL29 of Helicobacter hepaticus (strain ATCC 51449 / 3B1).